Consider the following 177-residue polypeptide: Large ribosomal subunit protein uL6 (177 aa).

Belongs to the universal ribosomal protein uL6 family. As to quaternary structure, part of the 50S ribosomal subunit.

This protein binds to the 23S rRNA, and is important in its secondary structure. It is located near the subunit interface in the base of the L7/L12 stalk, and near the tRNA binding site of the peptidyltransferase center. This is Large ribosomal subunit protein uL6 from Rhodopseudomonas palustris (strain BisB5).